Reading from the N-terminus, the 348-residue chain is Ion-translocating oxidoreductase complex subunit D (348 aa).

At 1-22 (MAFFIASSPHLRSKRSTADVMR) the chain is on the cytoplasmic side. 2 helical membrane passes run 23 to 43 (WVLV…GYGT) and 44 to 64 (LIQL…IMLL). The Cytoplasmic segment spans residues 65–71 (RKRSPIS). A helical membrane pass occupies residues 72–91 (ALRDYSAVVTAWLLAVAIPP). The Periplasmic portion of the chain corresponds to 92–94 (LSP). The helical transmembrane segment at 95–117 (WWVVVIGLIFAIVIAKHLYGGLG) threads the bilayer. The Cytoplasmic segment spans residues 118 to 125 (QNPFNPAM). The helical transmembrane segment at 126–146 (IAYVVLLISFPVQMTSWMAPI) threads the bilayer. Residues 147-213 (KLTAEPSSLV…ETLTQPQFSG (67 aa)) are Periplasmic-facing. Position 187 is an FMN phosphoryl threonine (Thr187). The helical transmembrane segment at 214 to 234 (FAGIGWEWVNIAYLLGGLILL) threads the bilayer. The Cytoplasmic segment spans residues 235–242 (KLRIIRWH). The chain crosses the membrane as a helical span at residues 243–263 (IPVAMLAGLVFTALLAQLFAP). Residues 264–265 (GT) lie on the Periplasmic side of the membrane. The chain crosses the membrane as a helical span at residues 266–286 (TASPMIHLLSGATMLGAFFIA). The Cytoplasmic segment spans residues 287 to 299 (TDPVSASTTDKGR). Helical transmembrane passes span 300-320 (LIYG…GGFP) and 321-341 (DGVA…DYYT). Residues 342–348 (KPRTYGH) lie on the Cytoplasmic side of the membrane.

The protein belongs to the NqrB/RnfD family. As to quaternary structure, the complex is composed of six subunits: RnfA, RnfB, RnfC, RnfD, RnfE and RnfG. Requires FMN as cofactor.

It is found in the cell inner membrane. Part of a membrane-bound complex that couples electron transfer with translocation of ions across the membrane. The protein is Ion-translocating oxidoreductase complex subunit D of Vibrio cholerae serotype O1 (strain ATCC 39541 / Classical Ogawa 395 / O395).